Reading from the N-terminus, the 198-residue chain is Dynein light chain Tctex-type protein 2 (198 aa).

The interval Met1–Ser34 is disordered. The span at Ser11–Pro24 shows a compositional bias: polar residues.

The protein belongs to the dynein light chain Tctex-type family. In terms of assembly, interacts with CCDC159. Interacts with CSNK2B. As to expression, expressed predominantly in testis. Also expressed in brain, lung and trachea.

It localises to the cytoplasm. It is found in the cytoskeleton. Its subcellular location is the cytoplasmic granule. The protein localises to the membrane. May be an accessory component of axonemal dynein and cytoplasmic dynein 1. Candidate for involvement in male sterility. This chain is Dynein light chain Tctex-type protein 2, found in Homo sapiens (Human).